Consider the following 410-residue polypeptide: Aspartate aminotransferase (410 aa).

L-aspartate is bound by residues G47, W135, and N185. K249 carries the post-translational modification N6-(pyridoxal phosphate)lysine. Position 385 (R385) interacts with L-aspartate.

It belongs to the class-I pyridoxal-phosphate-dependent aminotransferase family. Homodimer. The cofactor is pyridoxal 5'-phosphate.

It is found in the cytoplasm. The catalysed reaction is L-aspartate + 2-oxoglutarate = oxaloacetate + L-glutamate. It carries out the reaction L-2-aminoadipate + 2-oxoglutarate = 2-oxoadipate + L-glutamate. In terms of biological role, catalyzes the reversible conversion of aspartate and 2-oxoglutarate to glutamate and oxaloacetate. Genetic evidence shows that this protein is involved in L-lysine catabolism. It may have 2-aminoadipate:2-oxoglutarate aminotransferase activity. The protein is Aspartate aminotransferase (aatB) of Rhizobium meliloti (strain 1021) (Ensifer meliloti).